The chain runs to 330 residues: Short chain dehydrogenase macD (330 aa).

The NADP(+) site is built by Lys57, Asp86, Asn113, Tyr204, and Lys208. The Proton donor role is filled by Tyr204. The active-site Lowers pKa of active site Tyr is the Lys208.

The protein belongs to the short-chain dehydrogenases/reductases (SDR) family.

It functions in the pathway secondary metabolite biosynthesis; terpenoid biosynthesis. In terms of biological role, short chain dehydrogenase; part of the gene cluster that mediates the biosynthesis of macrophorins, isoprenoid epoxycyclohexenones containing cyclized drimane moieties. The first step of the pathway is the synthesis of 6-methylsalicylic acid (6-MSA) by the polyketide synthase macA. 6-MSA is then converted to m-cresol by the decarboxylase macB. The cytochrome P450 monooxygenase macC then catalyzes the oxidation of m-cresol to toluquinol. Epoxidation of toluquinol is then performed by the short chain dehydrogenase macD, with the help of macE, and a further prenylation by macG leads to 7-deacetoxyyanuthone A. The next step is the hydroxylation of C-22 of 7-deacetoxyyanuthone A by the cytochrome P450 monooxygenase macH to yield 22-deacetylyanuthone A. O-Mevalon transferase macI then attaches mevalon to the hydroxyl group of 22-deacetylyanuthone A to produce yanuthone E. The terpene cyclase macJ catalyzes the cyclization of 22-deacetylyanuthone A to macrophorin A. MacJ is also able to catalyze cyclization of yanuthone E and 7-deacetoxyyanuthone A to their corresponding macrophorins. The macJ products can be further modified by macH and macJ, as well as by the FAD-dependent monooxygenase macF, to produce additional macrophorins, including 4'-oxomacrophorin A, 4'-oxomacrophorin D and 4'-oxomacrophorin E. This chain is Short chain dehydrogenase macD, found in Penicillium terrestre.